We begin with the raw amino-acid sequence, 2021 residues long: Fanconi anemia group M protein homolog (2021 aa).

A Phosphoserine modification is found at serine 30. Residues 86 to 254 (ISRSALFCNT…QVITNLLIGK (169 aa)) enclose the Helicase ATP-binding domain. Residue 99 to 106 (LPTGLGKT) participates in ATP binding. Residues 202–205 (DEAH) carry the DEAH box motif. Positions 437–612 (KLEEVILEHF…VLRLYQGSPR (176 aa)) constitute a Helicase C-terminal domain. Disordered stretches follow at residues 638–657 (RSVQ…SKSN), 837–886 (PCRA…RMAD), 1002–1049 (CSPY…LPGT), 1244–1273 (GAAD…AISP), 1296–1319 (ASSS…SSKT), 1369–1441 (PRRT…RTCP), 1447–1466 (KGRN…RSQV), 1615–1700 (NKKQ…QPSI), and 1712–1732 (AQSH…ESRK). Positions 1018–1035 (ASHSAGNSQQNLESNSAK) are enriched in polar residues. Residues 1249 to 1259 (SGRHSDKEIKD) show a composition bias toward basic and acidic residues. Basic and acidic residues predominate over residues 1370-1379 (RRTEVEHLTS). Residues 1388–1397 (RKTKKPKRNV) are compositionally biased toward basic residues. Serine 1637 is modified (phosphoserine). A compositionally biased stretch (low complexity) spans 1669-1682 (SGPSGSSVPPQVLS). A compositionally biased stretch (polar residues) spans 1684-1700 (PSWNQSSRQRLQVQPSI). The tract at residues 1689 to 2009 (SSRQRLQVQP…LNQERQKPDT (321 aa)) is interaction with FAAP24.

The protein belongs to the DEAD box helicase family. DEAH subfamily. FANCM sub-subfamily. Component of the Fanconi anemia (FA) core complex, which consists of CENPS, CENPX, FANCA, FANCB, FANCC, FANCE, FANCF, FANCG, FANCL, FANCM, FAAP24 and FAAP100. The FA core complex associates with Bloom syndrome (BLM) complex, which consists of at least BLM, DNA topoisomerase 3-alpha/TOP3A, RMI1/BLAP75, RPA1/RPA70 and RPA2/RPA32. This supercomplex between FA and BLM complexes has been called BRAFT. Forms a discrete complex with CENPS and CENPX, called FANCM-MHF; this interaction stimulates DNA binding and replication fork remodeling by FANCM and stabilizes the binding partners. Forms a heterodimer with FAAP24; this interaction increases FANCM single-stranded DNA-binding activity. Post-translationally, phosphorylated; hyperphosphorylated in response to genotoxic stress.

It localises to the nucleus. It carries out the reaction ATP + H2O = ADP + phosphate + H(+). In terms of biological role, DNA-dependent ATPase component of the Fanconi anemia (FA) core complex. Required for the normal activation of the FA pathway, leading to monoubiquitination of the FANCI-FANCD2 complex in response to DNA damage, cellular resistance to DNA cross-linking drugs, and prevention of chromosomal breakage. In complex with CENPS and CENPX, binds double-stranded DNA (dsDNA), fork-structured DNA (fsDNA) and Holliday junction substrates. Its ATP-dependent DNA branch migration activity can process branched DNA structures such as a movable replication fork. This activity is strongly stimulated in the presence of CENPS and CENPX. In complex with FAAP24, efficiently binds to single-strand DNA (ssDNA), splayed-arm DNA, and 3'-flap substrates. In vitro, on its own, strongly binds ssDNA oligomers and weakly fsDNA, but does not bind to dsDNA. This chain is Fanconi anemia group M protein homolog (Fancm), found in Mus musculus (Mouse).